The primary structure comprises 360 residues: F-box protein SKP2B (360 aa).

Residues 25-76 form the F-box domain; sequence ISEWKDIPVELLMKILNLVDDRTVIIASCICSGWRDAVSLGLTRLSLSWCKK. 9 LRR repeats span residues 77–99, 101–126, 127–152, 153–178, 180–205, 206–231, 232–257, 258–301, and 302–333; these read NMNSLVLSLAPKFVKLQTLVLRQ, KPQLEDNAVEAIANHCHELQDLDLSK, SSKITDHSLYSLARGCTNLTKLNLSG, CTSFSDTALAHLTRFCRKLKILNLCG, VEAVSDNTLQAIGENCNQLQSLNLGW, CENISDDGVMSLAYGCPDLRTLDLCS, CVLITDESVVALANRCIHLRSLGLYY, CRNI…NISQ, and CTYLTPSAVQAVCDTFPALHTCSGRHSLVMSG.

Functionally, component of SCF(SKP2B) E3 ubiquitin ligase complexes, which mediate the ubiquitination and subsequent proteasomal degradation of the cyclin-dependent kinase inhibitor KRP1. Does not interact with auxin. The chain is F-box protein SKP2B (SKP2B) from Arabidopsis thaliana (Mouse-ear cress).